Consider the following 94-residue polypeptide: Large ribosomal subunit protein bL25 (94 aa).

The protein belongs to the bacterial ribosomal protein bL25 family. Part of the 50S ribosomal subunit; part of the 5S rRNA/L5/L18/L25 subcomplex. Contacts the 5S rRNA. Binds to the 5S rRNA independently of L5 and L18.

Its function is as follows. This is one of the proteins that binds to the 5S RNA in the ribosome where it forms part of the central protuberance. This Escherichia coli O6:K15:H31 (strain 536 / UPEC) protein is Large ribosomal subunit protein bL25.